The primary structure comprises 260 residues: MNEQPAACRIKVEALGAGFAPAAEQWAERLGLALQVDEAEFALQVGEQGLQLQQLGPDAPGPVRVDFVEGGAAHRRLYGGGSGQMIAKAVGVAQGVRPRVLDATAGLGKDGFVLATLGCEMSLIERQPLIGALLEDGLARAAQDAEVGPIVARMHLLKGNSIELMRNWQGEPPQVIYLDPMFPHREKSALVKKEMRLFRPLVGDDNDAPALLAAALALASHRVVVKRPRKAPCIEGPKPSHGLEGKSSRYDIYPKKALKA.

Residues 125–126 and Asp-179 contribute to the S-adenosyl-L-methionine site; that span reads ER.

The protein belongs to the methyltransferase superfamily. RsmJ family.

The protein resides in the cytoplasm. The enzyme catalyses guanosine(1516) in 16S rRNA + S-adenosyl-L-methionine = N(2)-methylguanosine(1516) in 16S rRNA + S-adenosyl-L-homocysteine + H(+). In terms of biological role, specifically methylates the guanosine in position 1516 of 16S rRNA. In Pseudomonas fluorescens (strain ATCC BAA-477 / NRRL B-23932 / Pf-5), this protein is Ribosomal RNA small subunit methyltransferase J.